Consider the following 113-residue polypeptide: Hemerythrin (113 aa).

7 residues coordinate Fe cation: His25, His54, Glu58, His73, His77, His101, and Asp106.

The protein belongs to the hemerythrin family. In terms of assembly, homotrimer.

Functionally, hemerythrin is a respiratory protein in blood cells of certain marine worms. The oxygen-binding site in each chain contains two iron atoms. This chain is Hemerythrin, found in Siphonosoma cumanense (Sipunculan worm).